The following is a 498-amino-acid chain: Lysine--tRNA ligase (498 aa).

Positions 407 and 414 each coordinate Mg(2+).

This sequence belongs to the class-II aminoacyl-tRNA synthetase family. As to quaternary structure, homodimer. It depends on Mg(2+) as a cofactor.

It localises to the cytoplasm. It catalyses the reaction tRNA(Lys) + L-lysine + ATP = L-lysyl-tRNA(Lys) + AMP + diphosphate. The chain is Lysine--tRNA ligase from Rhizobium johnstonii (strain DSM 114642 / LMG 32736 / 3841) (Rhizobium leguminosarum bv. viciae).